The following is a 192-amino-acid chain: dTTP/UTP pyrophosphatase (192 aa).

The active-site Proton acceptor is Asp-70.

The protein belongs to the Maf family. YhdE subfamily. It depends on a divalent metal cation as a cofactor.

The protein resides in the cytoplasm. The catalysed reaction is dTTP + H2O = dTMP + diphosphate + H(+). It catalyses the reaction UTP + H2O = UMP + diphosphate + H(+). Nucleoside triphosphate pyrophosphatase that hydrolyzes dTTP and UTP. May have a dual role in cell division arrest and in preventing the incorporation of modified nucleotides into cellular nucleic acids. The polypeptide is dTTP/UTP pyrophosphatase (Alkaliphilus oremlandii (strain OhILAs) (Clostridium oremlandii (strain OhILAs))).